The primary structure comprises 622 residues: Dehydrogenase mpl7 (622 aa).

FAD contacts are provided by residues 23–24 (TA), 44–45 (EA), and 102–105 (NFMS). Histidine 554 functions as the Proton acceptor in the catalytic mechanism. FAD is bound by residues alanine 582 and 593 to 594 (IM).

The protein belongs to the GMC oxidoreductase family. Homodimer. The cofactor is FAD.

Its pathway is mycotoxin biosynthesis. Dehydrogenase; part of the gene cluster that mediates the biosynthesis of the mycotoxin citrinin, a hepato-nephrotoxic compound to humans due to inhibition of respiration complex III. The pathway begins with the synthesis of a keto-aldehyde intermediate by the citrinin PKS (pksCT) from successive condensations of 4 malonyl-CoA units, presumably with a simple acetyl-CoA starter unit. Release of the keto-aldehyde intermediate is consistent with the presence of the C-terminal reductive release domain. Mp11 collaborates with pksCT by catalyzing the hydrolysis of ACP-bound acyl intermediates to free the ACP from stalled intermediates. Mpl2 then catalyzes the oxidation of the C-12 methyl of the ketone intermediate to an alcohol intermediate which is further oxidized by the oxidoreductase mpl7 to produce a bisaldehyde intermediate. The fourth catalytic step is catalyzed by the mpl4 aldehyde dehydrogenase. The final transformation is the reduction of C-3 by mpl6 to provide the chemically stable citrinin nucleus. This is Dehydrogenase mpl7 from Monascus purpureus (Red mold).